Consider the following 414-residue polypeptide: Tyrosine--tRNA ligase (414 aa).

Residue tyrosine 40 coordinates L-tyrosine. Residues 45–54 (ATAASLHVGH) carry the 'HIGH' region motif. Residues tyrosine 175 and glutamine 179 each contribute to the L-tyrosine site. Residues 235–239 (KMGKS) carry the 'KMSKS' region motif. An ATP-binding site is contributed by lysine 238. In terms of domain architecture, S4 RNA-binding spans 349–414 (LTVVQLLAQT…KKKHRMVQLG (66 aa)).

This sequence belongs to the class-I aminoacyl-tRNA synthetase family. TyrS type 1 subfamily. In terms of assembly, homodimer.

The protein resides in the cytoplasm. It carries out the reaction tRNA(Tyr) + L-tyrosine + ATP = L-tyrosyl-tRNA(Tyr) + AMP + diphosphate + H(+). Its function is as follows. Catalyzes the attachment of tyrosine to tRNA(Tyr) in a two-step reaction: tyrosine is first activated by ATP to form Tyr-AMP and then transferred to the acceptor end of tRNA(Tyr). This is Tyrosine--tRNA ligase from Paracoccus denitrificans (strain Pd 1222).